The following is a 448-amino-acid chain: Phosphoglucosamine mutase (448 aa).

Ser100 functions as the Phosphoserine intermediate in the catalytic mechanism. 4 residues coordinate Mg(2+): Ser100, Asp240, Asp242, and Asp244. Residue Ser100 is modified to Phosphoserine.

It belongs to the phosphohexose mutase family. Requires Mg(2+) as cofactor. Activated by phosphorylation.

It carries out the reaction alpha-D-glucosamine 1-phosphate = D-glucosamine 6-phosphate. Catalyzes the conversion of glucosamine-6-phosphate to glucosamine-1-phosphate. The protein is Phosphoglucosamine mutase of Clostridium perfringens (strain ATCC 13124 / DSM 756 / JCM 1290 / NCIMB 6125 / NCTC 8237 / Type A).